Here is a 161-residue protein sequence, read N- to C-terminus: Calmodulin-like protein (161 aa).

4 EF-hand domains span residues 21-56, 57-92, 93-128, and 129-161; these read EEID…LGQN, PTEQ…MMKE, TDSE…MGMQ, and FSEE…MSNQ. Ca(2+) contacts are provided by Asp34, Asp36, Asn38, Thr40, Glu45, Asp70, Asp72, Asn74, Gln76, Glu81, Asp106, Asp108, Asn110, Glu117, Asp142, Asp144, Asp146, Glu148, and Glu153.

It belongs to the calmodulin family.

Its function is as follows. This protein resembles calmodulin in sequence but possibly resembles troponin C in function. The sequence is that of Calmodulin-like protein (cal-1) from Caenorhabditis elegans.